A 1792-amino-acid polypeptide reads, in one-letter code: Non-reducing polyketide synthase aptA (1792 aa).

The interval 1–395 (MKDNTHSTTL…PRSFAHSKLA (395 aa)) is N-terminal acylcarrier protein transacylase domain (SAT). Residues 391 to 824 (HSKLAVVGMA…GGNTTVLLED (434 aa)) enclose the Ketosynthase family 3 (KS3) domain. Catalysis depends on for beta-ketoacyl synthase activity residues Cys-564, His-699, and His-742. The malonyl-CoA:ACP transacylase (MAT) domain stretch occupies residues 926–1243 (VFAFTGQGAF…NLVALHLAGC (318 aa)). A product template (PT) domain region spans residues 1308 to 1625 (TSLIHEIIEE…PRLLMDRFFS (318 aa)). An N-terminal hotdog fold region spans residues 1312–1447 (HEIIEETIGE…GSVRFEADAE (136 aa)). The PKS/mFAS DH domain maps to 1312 to 1621 (HEIIEETIGE…FRRVPRLLMD (310 aa)). The Proton acceptor; for dehydratase activity role is filled by His-1344. The tract at residues 1475–1621 (QASQLSKALS…FRRVPRLLMD (147 aa)) is C-terminal hotdog fold. Residue Asp-1533 is the Proton donor; for dehydratase activity of the active site. The span at 1634–1649 (VAASASSAPKTATKHA) shows a compositional bias: low complexity. The segment at 1634–1716 (VAASASSAPK…GPNGTTSQPE (83 aa)) is disordered. Residues 1664-1684 (TPSSLPTVQAQNTSPPQQVTP) show a composition bias toward polar residues. Positions 1694 to 1705 (TPEEEKPGKADA) are enriched in basic and acidic residues. One can recognise a Carrier domain in the interval 1715–1792 (PEATGVVGQC…DMMDWLEQYC (78 aa)). The residue at position 1752 (Ser-1752) is an O-(pantetheine 4'-phosphoryl)serine.

The cofactor is pantetheine 4'-phosphate.

It catalyses the reaction holo-[ACP] + 8 malonyl-CoA + acetyl-CoA + 8 H(+) = 3,6,8,9-tetrahydroxy-1-oxo-3-(2-oxopropyl)-1,2,3,4-tetrahydroanthracene-2-carboxyl-[ACP] + 8 CO2 + 9 CoA + 2 H2O. It participates in secondary metabolite biosynthesis. Its function is as follows. Non-reducing polyketide synthase (NRPKS); part of the gene cluster that mediates the biosynthesis of asperthecin, an anthraquinone pigment. Catalyzes the formation of the aromatic polyketide from acetyl coenzyme A and seven malonyl coenzyme A molecules. Through its product template (PT) domain, catalyzes the cyclization of the polyketide backbone via C6-C11 aldolcondensation. Polyketide is subsequently hydrolyzed from the NRPKS by the action of the hydrolase aptB into endocrocin-9-anthrone. Endocrocin-9-anthrone is then oxidized into endocrocin by aptC. Endocrocin is likely to decarboxylate spontaneously to form emodin which explains why there is no decarboxylase in the asperthecin biosynthesis cluster. Finally, aptC or another endogenous oxygenase catalyzes additional oxidation steps to form asperthecin. The chain is Non-reducing polyketide synthase aptA from Emericella nidulans (strain FGSC A4 / ATCC 38163 / CBS 112.46 / NRRL 194 / M139) (Aspergillus nidulans).